The following is a 490-amino-acid chain: 7-ethoxycoumarin O-deethylase (490 aa).

Cys432 provides a ligand contact to heme.

This sequence belongs to the cytochrome P450 family. The cofactor is heme.

In terms of biological role, capable of dealkylating a model xenobiotic compound, 7-ethoxycoumarin. Metabolizes with high efficiency a wide range of xenobiotics, including alkoxycoumarins, alkoxyresorufins, and several herbicides of the class of phenylureas. Catalyzes the double N-dealkylation (oxidative N-demethylation) of phenylureas such as chlortoluron and isoproturon with turnover rates comparable to those reported for physiological substrates and produces non-phytotoxic compounds. Could be used for control of herbicide tolerance and selectivity, as well as soil and groundwater bioremediation. This chain is 7-ethoxycoumarin O-deethylase (CYP76B1), found in Helianthus tuberosus (Jerusalem artichoke).